The following is a 497-amino-acid chain: UDP-N-acetylmuramoyl-L-alanyl-D-glutamate--2,6-diaminopimelate ligase (497 aa).

Residue Ser29 participates in UDP-N-acetyl-alpha-D-muramoyl-L-alanyl-D-glutamate binding. An ATP-binding site is contributed by 116-122 (GTNGKTT). Residues Asn157, 158–159 (TT), Ser185, Gln191, and Arg193 each bind UDP-N-acetyl-alpha-D-muramoyl-L-alanyl-D-glutamate. Lys225 carries the N6-carboxylysine modification. Meso-2,6-diaminopimelate contacts are provided by residues Arg392, 416 to 419 (DNPR), Gly467, and Glu471. A Meso-diaminopimelate recognition motif motif is present at residues 416-419 (DNPR).

Belongs to the MurCDEF family. MurE subfamily. Mg(2+) serves as cofactor. Post-translationally, carboxylation is probably crucial for Mg(2+) binding and, consequently, for the gamma-phosphate positioning of ATP.

It localises to the cytoplasm. It carries out the reaction UDP-N-acetyl-alpha-D-muramoyl-L-alanyl-D-glutamate + meso-2,6-diaminopimelate + ATP = UDP-N-acetyl-alpha-D-muramoyl-L-alanyl-gamma-D-glutamyl-meso-2,6-diaminopimelate + ADP + phosphate + H(+). The protein operates within cell wall biogenesis; peptidoglycan biosynthesis. Catalyzes the addition of meso-diaminopimelic acid to the nucleotide precursor UDP-N-acetylmuramoyl-L-alanyl-D-glutamate (UMAG) in the biosynthesis of bacterial cell-wall peptidoglycan. The chain is UDP-N-acetylmuramoyl-L-alanyl-D-glutamate--2,6-diaminopimelate ligase from Buchnera aphidicola subsp. Acyrthosiphon pisum (strain APS) (Acyrthosiphon pisum symbiotic bacterium).